The sequence spans 314 residues: 2,3-dihydroxyphenylpropionate/2,3-dihydroxicinnamic acid 1,2-dioxygenase (314 aa).

The Proton donor role is filled by H115. The active-site Proton acceptor is H179.

The protein belongs to the LigB/MhpB extradiol dioxygenase family. Homotetramer. The cofactor is Fe(2+).

It carries out the reaction 3-(2,3-dihydroxyphenyl)propanoate + O2 = (2Z,4E)-2-hydroxy-6-oxonona-2,4-dienedioate + H(+). The catalysed reaction is (2E)-3-(2,3-dihydroxyphenyl)prop-2-enoate + O2 = (2Z,4E,7E)-2-hydroxy-6-oxonona-2,4,7-trienedioate + H(+). It participates in aromatic compound metabolism; 3-phenylpropanoate degradation. Catalyzes the non-heme iron(II)-dependent oxidative cleavage of 2,3-dihydroxyphenylpropionic acid and 2,3-dihydroxicinnamic acid into 2-hydroxy-6-ketononadienedioate and 2-hydroxy-6-ketononatrienedioate, respectively. The chain is 2,3-dihydroxyphenylpropionate/2,3-dihydroxicinnamic acid 1,2-dioxygenase from Klebsiella pneumoniae subsp. pneumoniae (strain ATCC 700721 / MGH 78578).